Reading from the N-terminus, the 426-residue chain is Histidinol dehydrogenase (426 aa).

NAD(+) is bound by residues Tyr-130, Gln-187, and Asn-210. 3 residues coordinate substrate: Ser-233, Gln-255, and His-258. The Zn(2+) site is built by Gln-255 and His-258. Residues Glu-323 and His-324 each act as proton acceptor in the active site. Substrate is bound by residues His-324, Asp-357, Glu-411, and His-416. Position 357 (Asp-357) interacts with Zn(2+). His-416 lines the Zn(2+) pocket.

It belongs to the histidinol dehydrogenase family. Zn(2+) is required as a cofactor.

It carries out the reaction L-histidinol + 2 NAD(+) + H2O = L-histidine + 2 NADH + 3 H(+). It functions in the pathway amino-acid biosynthesis; L-histidine biosynthesis; L-histidine from 5-phospho-alpha-D-ribose 1-diphosphate: step 9/9. Catalyzes the sequential NAD-dependent oxidations of L-histidinol to L-histidinaldehyde and then to L-histidine. This is Histidinol dehydrogenase (hisD) from Aquifex aeolicus (strain VF5).